A 696-amino-acid chain; its full sequence is Caprolactamase subunit alpha (696 aa).

It belongs to the HyuA family. The caprolactamase is a heterotetramer composed of two alpha subunits (CapA) and two beta subunits (CapB).

With respect to regulation, activity is dependent on the presence of ATP and bicarbonate. The requirement for bicarbonate may be related to allosteric activation through conformational effects, but it is also conceivable that carboxyphosphate is formed and acts as a mediator in caprolactam activation, forming carboxy- or phospholactim. In terms of biological role, component of a caprolactamase involved in the degradation of caprolactam, an industrial compound mainly used in the production of Nylon 6. Catalyzes the ATP-dependent hydrolysis of the caprolactam ring to form 6-aminocaproic acid (6-ACA). The alpha subunit is responsible for ATP-dependent substrate phosphorylation. The enzyme cannot use 5-oxoproline. The chain is Caprolactamase subunit alpha from Pseudomonas jessenii.